An 846-amino-acid chain; its full sequence is ATR-interacting protein mus304 (846 aa).

3 disordered regions span residues 20 to 40, 90 to 109, and 135 to 162; these read DVSVTRGSARPSPPRNNFDGI, QGSTSTQQMFPPPPPPQKKP, and EPQKMPEPKTSTSRITTSSISVQQKTTT. Over residues 144-162 the composition is skewed to low complexity; that stretch reads TSTSRITTSSISVQQKTTT. 2 coiled-coil regions span residues 168–240 and 327–359; these read ATQS…LADE and EYSENEDQTKKRRNHFELELKQLLLHYARLQAK. The EEXXXDL motif signature appears at 504–510; that stretch reads EELLFDL. The interval 651-681 is disordered; the sequence is GAVQGSVSNGSTSASVSNPNQNSNSSTTQRG. Positions 655-676 are enriched in low complexity; that stretch reads GSVSNGSTSASVSNPNQNSNSS.

This sequence belongs to the ATRIP family. Interacts with ATR/mei-41. In terms of tissue distribution, highly expressed in the oocyte and nurse cells from stage 5 onward and in embryos prior to during nuclear division 14. Then, it decreases to background levels during interphase 14. Weakly or not expressed in stage embryos and imaginal disks.

The protein resides in the cytoplasm. DNA damage checkpoint protein required for chromosome break repair and for genomic stability during development. The chain is ATR-interacting protein mus304 (mus304) from Drosophila melanogaster (Fruit fly).